A 122-amino-acid chain; its full sequence is Conotoxin flf14.2 (122 aa).

Positions 1–22 are cleaved as a signal peptide; sequence MGFRVLVLIVMVTTSALPFTFS. Residues 23–96 constitute a propeptide that is removed on maturation; it reads EESGRSPFRP…AESPVGQKRW (74 aa). Residues 53–91 form a disordered region; sequence RADGQPSDMRQPEMRRPEMRRPEVRRPEVRQPEFAESPV. A compositionally biased stretch (basic and acidic residues) spans 62–85; sequence RQPEMRRPEMRRPEVRRPEVRQPE. Disulfide bonds link Cys-101-Cys-121 and Cys-105-Cys-117.

Belongs to the conotoxin R superfamily. Expressed by the venom duct.

The protein resides in the secreted. The polypeptide is Conotoxin flf14.2 (Conus anabathrum floridanus (Florida cone)).